Here is a 207-residue protein sequence, read N- to C-terminus: Suppressor of IKBKE 1 (207 aa).

Coiled coils occupy residues 70–102 and 162–193; these read HILL…DALE and QFCK…SLQA.

Belongs to the SIKE family. As to quaternary structure, interacts with IKBKE and TBK1 via its coiled coil region. Interaction with TBK1 is disrupted upon viral infection or TLR3 stimulation. Interacts with CDC42BPB. Interacts with SIKE1 which mediates association with the STRIPAK core complex composed of PP2A catalytic and scaffolding subunits, the striatins (PP2A regulatory subunits), the striatin-associated proteins MOB4, STRIP1 and STRIP2, PDCD10 and members of the STE20 kinases, such as STK24 and STK26. Widely expressed. Expressed in brain, heart, skeletal muscle, colon, thymus, spleen, kidney, liver, small intestine, placenta, lung and leukocytes. Present in all cell lines tested (at protein level).

The protein localises to the cytoplasm. Its function is as follows. Physiological suppressor of IKK-epsilon and TBK1 that plays an inhibitory role in virus- and TLR3-triggered IRF3. Inhibits TLR3-mediated activation of interferon-stimulated response elements (ISRE) and the IFN-beta promoter. May act by disrupting the interactions of IKBKE or TBK1 with TICAM1/TRIF, IRF3 and RIGI. Does not inhibit NF-kappa-B activation pathways. Associates with the striatin-interacting phosphatase and kinase (STRIPAK) core complex, forming the extended (SIKE1:SLMAP)STRIPAK complex. The (SIKE1:SLMAP)STRIPAK complex dephosphorylates STK3 leading to the inhibition of Hippo signaling and the control of cell growth. This is Suppressor of IKBKE 1 from Homo sapiens (Human).